We begin with the raw amino-acid sequence, 122 residues long: Bet1-like SNARE 1-1 (122 aa).

Residues 1–103 lie on the Cytoplasmic side of the membrane; the sequence is MNPRREPRGG…VFETKSSRRM (103 aa). The 63-residue stretch at 32–94 folds into the t-SNARE coiled-coil homology domain; sequence EINEHENERA…SGTMDRFKTV (63 aa). Position 56 is a phosphoserine (serine 56). The chain crosses the membrane as a helical; Anchor for type IV membrane protein span at residues 104 to 121; the sequence is LTLVASFVGLFLVIYYLT. Arginine 122 is a topological domain (vesicular).

It belongs to the BET1 family.

It is found in the golgi apparatus membrane. The protein resides in the endoplasmic reticulum membrane. Functionally, required for vesicular transport from the ER to the Golgi complex. Functions as a SNARE associated with ER-derived vesicles. The sequence is that of Bet1-like SNARE 1-1 (BET11) from Arabidopsis thaliana (Mouse-ear cress).